The sequence spans 96 residues: NADH-quinone oxidoreductase subunit K (96 aa).

Transmembrane regions (helical) follow at residues 1–21, 25–45, and 56–76; these read MNYIVLAAIVFTIGAVGVLVR, IIVFMCVELMLNACNLAFVAF, and VIAFFVMVVAAAEVVVGLAII.

The protein belongs to the complex I subunit 4L family. In terms of assembly, NDH-1 is composed of 14 different subunits. Subunits NuoA, H, J, K, L, M, N constitute the membrane sector of the complex.

The protein resides in the cell membrane. It carries out the reaction a quinone + NADH + 5 H(+)(in) = a quinol + NAD(+) + 4 H(+)(out). NDH-1 shuttles electrons from NADH, via FMN and iron-sulfur (Fe-S) centers, to quinones in the respiratory chain. The immediate electron acceptor for the enzyme in this species is believed to be a menaquinone. Couples the redox reaction to proton translocation (for every two electrons transferred, four hydrogen ions are translocated across the cytoplasmic membrane), and thus conserves the redox energy in a proton gradient. The protein is NADH-quinone oxidoreductase subunit K of Thermobifida fusca (strain YX).